The primary structure comprises 103 residues: Large ribosomal subunit protein bL21 (103 aa).

Belongs to the bacterial ribosomal protein bL21 family. Part of the 50S ribosomal subunit. Contacts protein L20.

In terms of biological role, this protein binds to 23S rRNA in the presence of protein L20. This chain is Large ribosomal subunit protein bL21, found in Thermobifida fusca (strain YX).